The primary structure comprises 677 residues: Electrogenic aspartate/glutamate antiporter SLC25A12, mitochondrial (677 aa).

At Ala-2 the chain carries N-acetylalanine. The regulatory N-terminal domain stretch occupies residues 2 to 294; it reads AVKVHTTKRG…TLADIERIAP (293 aa). Residues 2 to 329 lie on the Mitochondrial intermembrane side of the membrane; that stretch reads AVKVHTTKRG…WLQIAESAYR (328 aa). 4 consecutive EF-hand domains span residues 40–85, 86–121, 122–156, and 157–192; these read VQRY…SVLC, APDS…TIIH, HHIP…FLQE, and LQLE…IRSH. The Ca(2+) site is built by Asp-65, Thr-67, Asp-69, Leu-71, and Glu-76. Positions 295-310 are linker loop domain; that stretch reads LAEGALPYNLAELQRQ. The tract at residues 320–612 is carrier domain; sequence WLQIAESAYR…RWFYIDFGGL (293 aa). Solcar repeat units follow at residues 324–416, 424–508, and 516–604; these read AESA…VRDK, IPLP…CKLL, and VGGI…LQRW. Residues 330-347 form a helical membrane-spanning segment; sequence FTLGSVAGAVGATAVYPI. Residues 348-390 lie on the Mitochondrial matrix side of the membrane; that stretch reads DLVKTRMQNQRGTGSVVGELMYKNSFDCFKKVLRYEGFFGLYR. The chain crosses the membrane as a helical span at residues 391–410; the sequence is GLIPQLIGVAPEKAIKLTVN. Over 411–433 the chain is Mitochondrial intermembrane; sequence DFVRDKFTKRDGSIPLPAEILAG. The chain crosses the membrane as a helical span at residues 434 to 447; it reads GCAGGSQVIFTNPL. Residues 448–482 are Mitochondrial matrix-facing; that stretch reads EIVKIRLQVAGEITTGPRVSALNVLQDLGLFGLYK. Residues 483–502 traverse the membrane as a helical segment; the sequence is GAKACFLRDIPFSAIYFPVY. The Mitochondrial intermembrane portion of the chain corresponds to 503 to 521; it reads AHCKLLLADENGRVGGINL. Residues 522 to 539 form a helical membrane-spanning segment; it reads LTAGALAGVPAASLVTPA. Residues 540–578 lie on the Mitochondrial matrix side of the membrane; that stretch reads DVIKTRLQVAARAGQTTYSGVVDCFRKILREEGPSAFWK. Residues 579–598 traverse the membrane as a helical segment; that stretch reads GTAARVFRSSPQFGVTLVTY. Residues 599 to 677 are Mitochondrial intermembrane-facing; sequence ELLQRWFYID…AQPKAAAAAQ (79 aa). Residues 613–677 are C-terminal domain; the sequence is KPSGSEPTPK…AQPKAAAAAQ (65 aa).

It belongs to the mitochondrial carrier (TC 2.A.29) family. In terms of assembly, homodimer (via N-terminus).

It localises to the mitochondrion inner membrane. It catalyses the reaction L-aspartate(in) + L-glutamate(out) + H(+)(out) = L-aspartate(out) + L-glutamate(in) + H(+)(in). It carries out the reaction 3-sulfino-L-alanine(out) + L-glutamate(in) + H(+)(in) = 3-sulfino-L-alanine(in) + L-glutamate(out) + H(+)(out). The enzyme catalyses 3-sulfino-L-alanine(out) + L-aspartate(in) = 3-sulfino-L-alanine(in) + L-aspartate(out). Mitochondrial electrogenic aspartate/glutamate antiporter that favors efflux of aspartate and entry of glutamate and proton within the mitochondria as part of the malate-aspartate shuttle. Also mediates the uptake of L-cysteinesulfinate (3-sulfino-L-alanine) by mitochondria in exchange of L-glutamate and proton. Can also exchange L-cysteinesulfinate with aspartate in their anionic form without any proton translocation. Lacks transport activity towards L-glutamine or gamma-aminobutyric acid (GABA). The protein is Electrogenic aspartate/glutamate antiporter SLC25A12, mitochondrial of Mus musculus (Mouse).